The sequence spans 385 residues: MAEQNDSNGNYDDGEEITEPEQLRKLFIGGLDYRTTDDGLKAHFEKWGNIVDVVVMKDPKTKRSRGFGFITYSQSYMIDNAQNARPHKIDGRTVEPKRAVPRQEIDSPNAGATVKKLFVGGLRDDHDEECLREYFKDFGQIVSVNIVSDKDTGKKRGFAFIEFDDYDPVDKIILQKTHSIKNKTLDVKKAIAKQDMDRQGGGGGRGGPRAGGRGGQGDRGQGGGGWGGQNRQNGGGNWGGAGGGGGFGNSGGNFGGGQGGGSGGWNQQGGSGGGPWNNQGGGNGGWNGGGGGGYGGGNSNGSWGGNGGGGGGGGGFGNEYQQSYGGGPQRNSNFGNNRPAPYSQGGGGGGFNKGNQGGGQGFAGNNYNTGGGGQGGNMGGGNRRY.

2 consecutive RRM domains span residues 24–101 and 115–192; these read RKLF…RAVP and KKLF…KAIA. Disordered stretches follow at residues 192–289 and 305–385; these read AKQD…WNGG and GNGG…NRRY. Gly residues-rich tracts occupy residues 199-289 and 305-317; these read QGGG…WNGG and GNGG…GGFG. A compositionally biased stretch (polar residues) spans 319–336; the sequence is EYQQSYGGGPQRNSNFGN. 2 stretches are compositionally biased toward gly residues: residues 344-362 and 369-385; these read QGGG…GQGF and TGGG…NRRY.

It is found in the nucleus. The protein resides in the cytoplasm. This protein is a component of ribonucleosomes. Could be needed to organize a concentration gradient of a dorsalizing morphogen (Dm) originating in the germinal vesicle. This chain is Heterogeneous nuclear ribonucleoprotein 87F (Hrb87F), found in Drosophila melanogaster (Fruit fly).